A 389-amino-acid chain; its full sequence is Inner membrane transport protein YdhP (389 aa).

The Cytoplasmic portion of the chain corresponds to 1 to 6 (MKINYP). The chain crosses the membrane as a helical span at residues 7 to 27 (LLALAIGAFGIGTTEFSPMGL). Over 28–43 (LPVIARGVDVSIPAAG) the chain is Periplasmic. Residues 44 to 64 (MLISAYAVGVMVGAPLMTLLL) form a helical membrane-spanning segment. Topologically, residues 65–70 (SHRARR) are cytoplasmic. The chain crosses the membrane as a helical span at residues 71–91 (SALIFLMAIFTLGNVLSAIAP). At 92 to 100 (DYMTLMLSR) the chain is on the periplasmic side. A helical membrane pass occupies residues 101–121 (ILTSLNHGAFFGLGSVVAASV). The Cytoplasmic segment spans residues 122–130 (VPKHKQASA). Residues 131–151 (VATMFMGLTLANIGGVPAATW) form a helical membrane-spanning segment. Topologically, residues 152–159 (LGETIGWR) are periplasmic. Residues 160 to 180 (MSFLATAGLGVISMVSLFFSL) form a helical membrane-spanning segment. Residues 181–203 (PKGGAGARPEVKKELAVLMRPQV) are Cytoplasmic-facing. Residues 204-224 (LSALLTTVLGAGAMFTLYTYI) traverse the membrane as a helical segment. The Periplasmic segment spans residues 225–236 (SPVLQSITHATP). The helical transmembrane segment at 237 to 257 (VFVTAMLVLIGVGFSIGNYLG) threads the bilayer. At 258-266 (GKLADRSVN) the chain is on the cytoplasmic side. Residues 267-287 (GTLKGFLLLLMVIMLAIPFLA) form a helical membrane-spanning segment. The Periplasmic segment spans residues 288-290 (RNE). The helical transmembrane segment at 291-311 (FGAAISMVVWGAATFAVVPPL) threads the bilayer. The Cytoplasmic segment spans residues 312-330 (QMRVMRVASEAPGLSSSVN). Residues 331 to 351 (IGAFNLGNALGAAAGGAVISA) traverse the membrane as a helical segment. The Periplasmic portion of the chain corresponds to 352–356 (GLGYS). A helical transmembrane segment spans residues 357 to 377 (FVPVMGAIVAGLALLLVFMSA). Over 378-389 (RKQPETVCVANS) the chain is Cytoplasmic.

The protein belongs to the major facilitator superfamily.

It is found in the cell inner membrane. The sequence is that of Inner membrane transport protein YdhP (ydhP) from Escherichia coli (strain K12).